The primary structure comprises 274 residues: 2,3,4,5-tetrahydropyridine-2,6-dicarboxylate N-succinyltransferase (274 aa).

This sequence belongs to the transferase hexapeptide repeat family.

It localises to the cytoplasm. It carries out the reaction (S)-2,3,4,5-tetrahydrodipicolinate + succinyl-CoA + H2O = (S)-2-succinylamino-6-oxoheptanedioate + CoA. It participates in amino-acid biosynthesis; L-lysine biosynthesis via DAP pathway; LL-2,6-diaminopimelate from (S)-tetrahydrodipicolinate (succinylase route): step 1/3. This is 2,3,4,5-tetrahydropyridine-2,6-dicarboxylate N-succinyltransferase from Alteromonas mediterranea (strain DSM 17117 / CIP 110805 / LMG 28347 / Deep ecotype).